A 455-amino-acid polypeptide reads, in one-letter code: MSFFADSVLMVISQLLFFGFGWLFFMRQLFKDYEVRQYVVQVVFSVTFAFSCTMFELIIFEILGLLNSSSRYFHWKLNLCVILLVLVFVVPFYIGYFVVSNIRLLHRQRLLFSCTIWLTFMYFFWKLGDPFPILSPKHGILSIEQLISRVGVIGVTLMALLSGFGAVNCPYTYMSYFLRNVTDADILALERRLLQTMDMIVSKKKRIAAVRRNMFQRGEEHSKPSGFWGMIKSVTSSAPVSENLYQIQQEVDALEELSRQLFLETADLHATKERIEYSKTFQGKYFNFLGYFFSIYCVWKIFMATINIVFDRVGKTDPVTRGIEITVNYLGIQFDVKFWSQHISFILVGIIIVTSIRGLLITLTKFFYAISSSKSSNVIVLLLAQIMGMYFVSSVLLIRMSMPLEYRTIITEVLGELQFNFYHRWFDVIFLVSALSSILFLYLAHKQAPEKHMAL.

2 helical membrane passes run 5-25 (ADSV…WLFF) and 46-66 (VTFA…LGLL). N-linked (GlcNAc...) asparagine glycosylation occurs at asparagine 67. 3 consecutive transmembrane segments (helical) span residues 79 to 99 (LCVI…YFVV), 111 to 131 (LFSC…GDPF), and 150 to 170 (VGVI…VNCP). Asparagine 180 carries an N-linked (GlcNAc...) asparagine glycan. Helical transmembrane passes span 290-310 (GYFF…NIVF), 343-363 (ISFI…LITL), 378-398 (VIVL…VLLI), and 425-445 (WFDV…YLAH).

The protein belongs to the Golgi pH regulator (TC 1.A.38) family. As to quaternary structure, homotrimer.

Its subcellular location is the golgi apparatus membrane. The enzyme catalyses iodide(out) = iodide(in). It carries out the reaction chloride(in) = chloride(out). The catalysed reaction is bromide(in) = bromide(out). It catalyses the reaction fluoride(in) = fluoride(out). Voltage-gated channel that enables the transfer of anions such as iodide, chloride, bromide and fluoride which may function in counter-ion conductance and participates in Golgi acidification. The protein is Golgi pH regulator (gpr89-b) of Xenopus laevis (African clawed frog).